A 1219-amino-acid chain; its full sequence is Pheromone-regulated membrane protein 10 (1219 aa).

Residues 1-11 (MMRTQSDEHVA) are compositionally biased toward basic and acidic residues. 4 disordered regions span residues 1 to 273 (MMRT…IERE), 303 to 490 (LASF…DPFT), 503 to 533 (HDDD…EDYV), and 555 to 713 (EGNK…RPVK). Acidic residues predominate over residues 42–53 (DENDDGHDDSDE). The span at 57-68 (SVVIPTPSVVIV) shows a compositional bias: low complexity. Positions 104-115 (LKSPGTPTTYSP) are enriched in polar residues. Low complexity predominate over residues 136–155 (GSSLSSTTLMNTLLNSSGLG). 2 stretches are compositionally biased toward acidic residues: residues 159 to 171 (TESE…DEEV) and 219 to 231 (QEEE…DDDG). Basic and acidic residues-rich tracts occupy residues 259-273 (ADRA…IERE), 330-346 (DDQR…RREN), and 395-421 (LDRR…EKER). Over residues 422–432 (QHHHHNHHHHH) the composition is skewed to basic residues. The segment covering 435 to 446 (ETGPNTGASSPF) has biased composition (polar residues). Residues 448–470 (EEEKDREAEEAEILRDQARDLVN) show a composition bias toward basic and acidic residues. The span at 565–577 (TTVGDGTSTGDVS) shows a compositional bias: low complexity. A compositionally biased stretch (basic residues) spans 598 to 615 (KSKTKTTQKLGLKKKKKE). Positions 616–641 (LLKIIEDQRKEKEENKKRPKWYDKSR) are enriched in basic and acidic residues. Residues 642-652 (STSPSPGGTPA) show a composition bias toward low complexity. The segment covering 653–673 (PHHHHHIPGLHLHHHTKGHQR) has biased composition (basic residues). Positions 693-713 (GGDKPPDRPRSLRSEALRPVK) are enriched in basic and acidic residues. 10 consecutive transmembrane segments (helical) span residues 864–884 (PPWL…PYAF), 888–908 (WADI…QIIV), 918–938 (VFEV…GTIS), 945–965 (FCFA…YIVL), 983–1003 (MFYA…GAVV), 1021–1041 (LDPL…ALVN), 1049–1069 (PSML…GANI), 1075–1095 (SSYL…NLYS), 1100–1120 (GLAF…GVAS), and 1184–1204 (LGFT…AATL).

It belongs to the ThrE exporter (TC 2.A.79) family.

The protein localises to the membrane. The chain is Pheromone-regulated membrane protein 10 from Yarrowia lipolytica (strain CLIB 122 / E 150) (Yeast).